A 658-amino-acid chain; its full sequence is tRNA 5-methylaminomethyl-2-thiouridine biosynthesis bifunctional protein MnmC (658 aa).

The tRNA (mnm(5)s(2)U34)-methyltransferase stretch occupies residues 1–236; that stretch reads MIPELPHAQL…KWEVLRGEFL (236 aa). Residues 265–658 are FAD-dependent cmnm(5)s(2)U34 oxidoreductase; the sequence is IGGGLAGCAS…ALRRLIRGKA (394 aa).

It in the N-terminal section; belongs to the methyltransferase superfamily. tRNA (mnm(5)s(2)U34)-methyltransferase family. In the C-terminal section; belongs to the DAO family. FAD is required as a cofactor.

It localises to the cytoplasm. The catalysed reaction is 5-aminomethyl-2-thiouridine(34) in tRNA + S-adenosyl-L-methionine = 5-methylaminomethyl-2-thiouridine(34) in tRNA + S-adenosyl-L-homocysteine + H(+). Its function is as follows. Catalyzes the last two steps in the biosynthesis of 5-methylaminomethyl-2-thiouridine (mnm(5)s(2)U) at the wobble position (U34) in tRNA. Catalyzes the FAD-dependent demodification of cmnm(5)s(2)U34 to nm(5)s(2)U34, followed by the transfer of a methyl group from S-adenosyl-L-methionine to nm(5)s(2)U34, to form mnm(5)s(2)U34. This Pseudomonas fluorescens (strain ATCC BAA-477 / NRRL B-23932 / Pf-5) protein is tRNA 5-methylaminomethyl-2-thiouridine biosynthesis bifunctional protein MnmC.